The chain runs to 460 residues: GTPase Der (460 aa).

EngA-type G domains follow at residues 3-167 and 189-364; these read FTFA…PEPD and IRVA…ATWN. GTP contacts are provided by residues 9–16, 56–60, 119–122, 195–202, 242–246, and 307–310; these read GRPNVGKS, DTAGL, NKSE, GRPNAGKS, and NKWD. One can recognise a KH-like domain in the interval 365–449; sequence RRVPTAALNR…PVRIMLREKA (85 aa).

Belongs to the TRAFAC class TrmE-Era-EngA-EngB-Septin-like GTPase superfamily. EngA (Der) GTPase family. Associates with the 50S ribosomal subunit.

GTPase that plays an essential role in the late steps of ribosome biogenesis. In Rhodopseudomonas palustris (strain BisA53), this protein is GTPase Der.